The sequence spans 148 residues: Small ribosomal subunit protein uS13 (148 aa).

A disordered region spans residues 128–148; the sequence is RGQRTKSTGRRGSTIGVRKKK.

It belongs to the universal ribosomal protein uS13 family. As to quaternary structure, part of the 30S ribosomal subunit. Forms a loose heterodimer with protein S19. Forms two bridges to the 50S subunit in the 70S ribosome.

Functionally, located at the top of the head of the 30S subunit, it contacts several helices of the 16S rRNA. In the 70S ribosome it contacts the 23S rRNA (bridge B1a) and protein L5 of the 50S subunit (bridge B1b), connecting the 2 subunits; these bridges are implicated in subunit movement. The chain is Small ribosomal subunit protein uS13 from Methanococcoides burtonii (strain DSM 6242 / NBRC 107633 / OCM 468 / ACE-M).